We begin with the raw amino-acid sequence, 834 residues long: Protein translocase subunit SecA (834 aa).

ATP contacts are provided by residues Gln-85, 103 to 107, and Asp-491; that span reads GEGKT. The segment at 790–809 is disordered; that stretch reads RETSTNINDGEGGSHEPIKR. 4 residues coordinate Zn(2+): Cys-820, Cys-822, Cys-831, and Cys-832.

This sequence belongs to the SecA family. As to quaternary structure, monomer and homodimer. Part of the essential Sec protein translocation apparatus which comprises SecA, SecYEG and auxiliary proteins SecDF. Other proteins may also be involved. It depends on Zn(2+) as a cofactor.

Its subcellular location is the cell membrane. It localises to the cytoplasm. The catalysed reaction is ATP + H2O + cellular proteinSide 1 = ADP + phosphate + cellular proteinSide 2.. In terms of biological role, part of the Sec protein translocase complex. Interacts with the SecYEG preprotein conducting channel. Has a central role in coupling the hydrolysis of ATP to the transfer of proteins into and across the cell membrane, serving as an ATP-driven molecular motor driving the stepwise translocation of polypeptide chains across the membrane. This Clostridium novyi (strain NT) protein is Protein translocase subunit SecA.